The following is a 634-amino-acid chain: 1-deoxy-D-xylulose-5-phosphate synthase (634 aa).

Residues histidine 73 and 114-116 (GHS) contribute to the thiamine diphosphate site. Mg(2+) is bound at residue aspartate 145. Thiamine diphosphate contacts are provided by residues 146 to 147 (GA), asparagine 174, tyrosine 285, and glutamate 365. Asparagine 174 provides a ligand contact to Mg(2+).

The protein belongs to the transketolase family. DXPS subfamily. In terms of assembly, homodimer. Mg(2+) is required as a cofactor. Thiamine diphosphate serves as cofactor.

The catalysed reaction is D-glyceraldehyde 3-phosphate + pyruvate + H(+) = 1-deoxy-D-xylulose 5-phosphate + CO2. The protein operates within metabolic intermediate biosynthesis; 1-deoxy-D-xylulose 5-phosphate biosynthesis; 1-deoxy-D-xylulose 5-phosphate from D-glyceraldehyde 3-phosphate and pyruvate: step 1/1. Catalyzes the acyloin condensation reaction between C atoms 2 and 3 of pyruvate and glyceraldehyde 3-phosphate to yield 1-deoxy-D-xylulose-5-phosphate (DXP). This chain is 1-deoxy-D-xylulose-5-phosphate synthase, found in Desulforudis audaxviator (strain MP104C).